Reading from the N-terminus, the 729-residue chain is NAD(P)H-quinone oxidoreductase subunit 5, chloroplastic (729 aa).

Transmembrane regions (helical) follow at residues 9 to 29 (WIIP…SFFF), 39 to 59 (LCAL…LAIF), 87 to 107 (FLVD…GVLV), 125 to 145 (YAYL…PNLI), 147 to 167 (LYVF…FWFA), 184 to 204 (IGDF…GSFE), 218 to 238 (IGFS…AGPV), 258 to 278 (TPIS…FFIA), 289 to 311 (LVMQ…LALA), 327 to 347 (LGYM…FHLV), 354 to 374 (ALLF…VGYS), 395 to 415 (GTTF…ACFW), 425 to 445 (WLSS…TAFY), 540 to 560 (FSLV…INLI), 592 to 612 (ILLN…FSFI), 627 to 646 (LVGF…SWSL), 676 to 696 (YGID…GEFI), and 708 to 728 (LFII…FLPF).

The protein belongs to the complex I subunit 5 family. NDH is composed of at least 16 different subunits, 5 of which are encoded in the nucleus.

The protein localises to the plastid. The protein resides in the chloroplast thylakoid membrane. The catalysed reaction is a plastoquinone + NADH + (n+1) H(+)(in) = a plastoquinol + NAD(+) + n H(+)(out). It carries out the reaction a plastoquinone + NADPH + (n+1) H(+)(in) = a plastoquinol + NADP(+) + n H(+)(out). Functionally, NDH shuttles electrons from NAD(P)H:plastoquinone, via FMN and iron-sulfur (Fe-S) centers, to quinones in the photosynthetic chain and possibly in a chloroplast respiratory chain. The immediate electron acceptor for the enzyme in this species is believed to be plastoquinone. Couples the redox reaction to proton translocation, and thus conserves the redox energy in a proton gradient. The polypeptide is NAD(P)H-quinone oxidoreductase subunit 5, chloroplastic (ndhF) (Adiantum capillus-veneris (Maidenhair fern)).